The sequence spans 347 residues: Eukaryotic translation initiation factor 3 subunit I (347 aa).

WD repeat units lie at residues 8–47 (GHER…RLGT), 50–89 (GHTG…CVAT), 149–190 (THEG…EYVD), 194–233 (LHEK…VLKK), and 291–330 (GHFG…FDFK). Phosphoserine is present on serine 302.

This sequence belongs to the eIF-3 subunit I family. Component of the eukaryotic translation initiation factor 3 (eIF-3) complex.

It is found in the cytoplasm. Component of the eukaryotic translation initiation factor 3 (eIF-3) complex, which is involved in protein synthesis of a specialized repertoire of mRNAs and, together with other initiation factors, stimulates binding of mRNA and methionyl-tRNAi to the 40S ribosome. The eIF-3 complex specifically targets and initiates translation of a subset of mRNAs involved in cell proliferation. The chain is Eukaryotic translation initiation factor 3 subunit I from Saccharomyces cerevisiae (strain YJM789) (Baker's yeast).